We begin with the raw amino-acid sequence, 89 residues long: Putative regulatory protein Dalk_1931 (89 aa).

The protein belongs to the RemA family.

The polypeptide is Putative regulatory protein Dalk_1931 (Desulfatibacillum aliphaticivorans).